The primary structure comprises 118 residues: Flowering-promoting factor 1-like protein 4 (118 aa).

It belongs to the FPF1 family.

This Oryza sativa subsp. japonica (Rice) protein is Flowering-promoting factor 1-like protein 4.